Consider the following 730-residue polypeptide: Hepatocyte growth factor (730 aa).

Residues 1-31 (MWVTRLLPVLLLQHVLLHLLLLPIAIPYAEG) form the signal peptide. Position 32 is a pyrrolidone carboxylic acid (Q32). The PAN domain occupies 37-123 (NTLHEFKRSA…HEFDLYENKD (87 aa)). 8 disulfide bridges follow: C70/C96, C74/C84, C128/C206, C149/C189, C177/C201, C211/C288, C232/C271, and C260/C283. Kringle domains lie at 128–206 (CIIG…IPQC) and 211–288 (CMTC…IKMC). Residue N294 is glycosylated (N-linked (GlcNAc...) asparagine). Intrachain disulfides connect C305–C383, C326–C365, C354–C377, C391–C469, C412–C452, C440–C464, C487–C606, C519–C535, C614–C681, C644–C660, and C671–C699. 2 Kringle domains span residues 305-383 (CIQG…IPKC) and 391-469 (CYRG…ISRC). The region spanning 495–723 (VVNGIPTRTN…YAKWIHKIIL (229 aa)) is the Peptidase S1 domain. Residues N568 and N655 are each glycosylated (N-linked (GlcNAc...) asparagine).

This sequence belongs to the peptidase S1 family. Plasminogen subfamily. As to quaternary structure, dimer of an alpha chain and a beta chain linked by a disulfide bond. Interacts with SRPX2; the interaction increases HGF mitogenic activity. The single-chain precursor undergoes proteolytic processing by TMPRSS13 resulting in an active two-chain form. The single-chain precursor undergoes proteolytic processing by HGFAC resulting in an active two-chain form.

Potent mitogen for mature parenchymal hepatocyte cells, seems to be a hepatotrophic factor, and acts as a growth factor for a broad spectrum of tissues and cell types. Activating ligand for the receptor tyrosine kinase MET by binding to it and promoting its dimerization. Activates MAPK signaling following TMPRSS13 cleavage and activation. The protein is Hepatocyte growth factor (HGF) of Bos taurus (Bovine).